A 1383-amino-acid polypeptide reads, in one-letter code: DNA-directed RNA polymerase subunit beta (1383 aa).

This sequence belongs to the RNA polymerase beta chain family. In terms of assembly, the RNAP catalytic core consists of 2 alpha, 1 beta, 1 beta' and 1 omega subunit. When a sigma factor is associated with the core the holoenzyme is formed, which can initiate transcription.

The catalysed reaction is RNA(n) + a ribonucleoside 5'-triphosphate = RNA(n+1) + diphosphate. In terms of biological role, DNA-dependent RNA polymerase catalyzes the transcription of DNA into RNA using the four ribonucleoside triphosphates as substrates. The sequence is that of DNA-directed RNA polymerase subunit beta from Xanthomonas axonopodis pv. citri (strain 306).